A 964-amino-acid polypeptide reads, in one-letter code: SKI family transcriptional corepressor 1 (964 aa).

Disordered stretches follow at residues 45 to 72, 278 to 365, 414 to 452, 525 to 587, 610 to 766, and 793 to 842; these read TQLG…SSAL, RTFS…GGSA, AGEP…PGPG, AGGG…RKSS, REAY…GPAA, and YLCT…EDGL. Residues 283–310 are compositionally biased toward gly residues; the sequence is QGGGGGGANSGSGGAGKGGAGGGGGPGC. The span at 345–355 shows a compositional bias: low complexity; sequence ALGLAAAANGP. 2 stretches are compositionally biased toward gly residues: residues 356–365 and 417–440; these read AGPGGPGGSA and PKGG…GPGA. The span at 571 to 583 shows a compositional bias: pro residues; it reads SLAPLAPPPPPPA. The span at 652 to 661 shows a compositional bias: acidic residues; that stretch reads DTADEPEVDV. Positions 798 to 808 are enriched in basic and acidic residues; it reads ETHEPDKEDNH. Polar residues predominate over residues 823-834; sequence DQRSVSQPSPAN. Positions 857 to 921 form a coiled coil; sequence ENLAREELQK…DTLCNELDQE (65 aa).

Belongs to the SKI family. In terms of assembly, interacts with LBX1. Interacts with SMAD1, SMAD2 and SMAD3.

Its subcellular location is the nucleus. Its function is as follows. Inhibits BMP signaling. Acts as a transcriptional corepressor of LBX1. The sequence is that of SKI family transcriptional corepressor 1 (Skor1) from Rattus norvegicus (Rat).